We begin with the raw amino-acid sequence, 264 residues long: tRNA (guanine-N(1)-)-methyltransferase (264 aa).

S-adenosyl-L-methionine-binding positions include Gly120 and 140 to 145 (IGDYVL).

This sequence belongs to the RNA methyltransferase TrmD family. In terms of assembly, homodimer.

It is found in the cytoplasm. It catalyses the reaction guanosine(37) in tRNA + S-adenosyl-L-methionine = N(1)-methylguanosine(37) in tRNA + S-adenosyl-L-homocysteine + H(+). In terms of biological role, specifically methylates guanosine-37 in various tRNAs. This chain is tRNA (guanine-N(1)-)-methyltransferase, found in Halorhodospira halophila (strain DSM 244 / SL1) (Ectothiorhodospira halophila (strain DSM 244 / SL1)).